An 845-amino-acid chain; its full sequence is Alanine--tRNA ligase (845 aa).

The Zn(2+) site is built by H552, H556, C653, and H657.

This sequence belongs to the class-II aminoacyl-tRNA synthetase family. Requires Zn(2+) as cofactor.

Its subcellular location is the cytoplasm. It catalyses the reaction tRNA(Ala) + L-alanine + ATP = L-alanyl-tRNA(Ala) + AMP + diphosphate. Functionally, catalyzes the attachment of alanine to tRNA(Ala) in a two-step reaction: alanine is first activated by ATP to form Ala-AMP and then transferred to the acceptor end of tRNA(Ala). Also edits incorrectly charged Ser-tRNA(Ala) and Gly-tRNA(Ala) via its editing domain. This chain is Alanine--tRNA ligase, found in Campylobacter fetus subsp. fetus (strain 82-40).